A 186-amino-acid polypeptide reads, in one-letter code: Elongation factor P (186 aa).

The protein belongs to the elongation factor P family.

Its subcellular location is the cytoplasm. Its pathway is protein biosynthesis; polypeptide chain elongation. Involved in peptide bond synthesis. Stimulates efficient translation and peptide-bond synthesis on native or reconstituted 70S ribosomes in vitro. Probably functions indirectly by altering the affinity of the ribosome for aminoacyl-tRNA, thus increasing their reactivity as acceptors for peptidyl transferase. This is Elongation factor P from Brucella abortus (strain S19).